A 336-amino-acid chain; its full sequence is Casein kinase II subunit alpha (336 aa).

Residues 37 to 322 (YQLVRKLGRG…AREAMAHPYF (286 aa)) form the Protein kinase domain. Residues 43–51 (LGRGKYSEV) and lysine 66 each bind ATP. Catalysis depends on aspartate 154, which acts as the Proton acceptor.

This sequence belongs to the protein kinase superfamily. Ser/Thr protein kinase family. CK2 subfamily. As to quaternary structure, tetramer of two alpha and two beta chains. Mg(2+) is required as a cofactor.

The protein localises to the nucleus. It localises to the nucleolus. The catalysed reaction is L-seryl-[protein] + ATP = O-phospho-L-seryl-[protein] + ADP + H(+). It carries out the reaction L-threonyl-[protein] + ATP = O-phospho-L-threonyl-[protein] + ADP + H(+). Casein kinases are operationally defined by their preferential utilization of acidic proteins such as caseins as substrates. The alpha chain contains the catalytic site. May participate in Wnt signaling. The sequence is that of Casein kinase II subunit alpha (CkIIalpha) from Drosophila melanogaster (Fruit fly).